Here is a 394-residue protein sequence, read N- to C-terminus: Phosphoglycerate kinase (394 aa).

Substrate-binding positions include 21–23, Arg36, 59–62, Arg118, and Arg151; these read DFN and HLGR. The residue at position 183 (Ser183) is a Phosphoserine. ATP-binding residues include Lys201 and Gly292. Thr299 bears the Phosphothreonine mark. ATP-binding positions include Glu323 and 350–353; that span reads GGDS.

Belongs to the phosphoglycerate kinase family. Monomer.

It is found in the cytoplasm. The catalysed reaction is (2R)-3-phosphoglycerate + ATP = (2R)-3-phospho-glyceroyl phosphate + ADP. It participates in carbohydrate degradation; glycolysis; pyruvate from D-glyceraldehyde 3-phosphate: step 2/5. In Bacillus cereus (strain ATCC 10987 / NRS 248), this protein is Phosphoglycerate kinase.